Consider the following 248-residue polypeptide: Triosephosphate isomerase (248 aa).

Substrate contacts are provided by N12 and K14. The tract at residues N16–K30 is igE-binding. H95 (electrophile) is an active-site residue. E165 (proton acceptor) is an active-site residue. IgE-binding regions lie at residues P166–Q180 and R205–E219.

The protein belongs to the triosephosphate isomerase family. As to quaternary structure, homodimer. Expressed in skeletal muscle (at protein level).

It is found in the cytoplasm. The catalysed reaction is D-glyceraldehyde 3-phosphate = dihydroxyacetone phosphate. It carries out the reaction dihydroxyacetone phosphate = methylglyoxal + phosphate. The protein operates within carbohydrate biosynthesis; gluconeogenesis. It participates in carbohydrate degradation; glycolysis; D-glyceraldehyde 3-phosphate from glycerone phosphate: step 1/1. Its function is as follows. Triosephosphate isomerase is an extremely efficient metabolic enzyme that catalyzes the interconversion between dihydroxyacetone phosphate (DHAP) and D-glyceraldehyde-3-phosphate (G3P) in glycolysis and gluconeogenesis. Functionally, it is also responsible for the non-negligible production of methylglyoxal a reactive cytotoxic side-product that modifies and can alter proteins, DNA and lipids. This is Triosephosphate isomerase from Procambarus clarkii (Red swamp crayfish).